Consider the following 407-residue polypeptide: Arginine deiminase (407 aa).

Catalysis depends on Cys397, which acts as the Amidino-cysteine intermediate.

It belongs to the arginine deiminase family.

It localises to the cytoplasm. The enzyme catalyses L-arginine + H2O = L-citrulline + NH4(+). Its pathway is amino-acid degradation; L-arginine degradation via ADI pathway; carbamoyl phosphate from L-arginine: step 1/2. The sequence is that of Arginine deiminase from Listeria welshimeri serovar 6b (strain ATCC 35897 / DSM 20650 / CCUG 15529 / CIP 8149 / NCTC 11857 / SLCC 5334 / V8).